A 260-amino-acid chain; its full sequence is Histidine-binding periplasmic protein (260 aa).

The N-terminal stretch at 1-22 is a signal peptide; sequence MKKLVLSLSLVLAFSSATAAFA. Cysteine 60 and cysteine 67 are joined by a disulfide. Serine 91, serine 92, serine 94, arginine 99, threonine 143, and aspartate 183 together coordinate L-histidine.

This sequence belongs to the bacterial solute-binding protein 3 family. The complex is composed of two ATP-binding proteins (HisP), two transmembrane proteins (HisM and HisQ) and a solute-binding protein (HisJ).

It is found in the periplasm. Functionally, part of the ABC transporter complex HisPMQJ involved in histidine transport. Binds histidine. Interacts with HisQMP and stimulates ATPase activity of HisP, which results in histidine translocation. This is Histidine-binding periplasmic protein (hisJ) from Escherichia coli O157:H7.